A 259-amino-acid chain; its full sequence is MSKREDGRRDDELRPVVITRGFTENPAGSVLIEFGRTKVMCTASVTEGVSRWRKGSGLGWLTAEYAMLPSATHTRSDRESVKGRVGGRTQEISRLVGRSLRACIDLAALGENTIAVDCDVLQADGGTRTAAITGAYVALADAVNYLAAAGKLSDPRPLSCAIAAVSVGVVDGRVRVDLPYEEDSRAEVDMNVVATDTGTLVEVQGTGEGATFPRSTLDKLLDMALGACDTLFAAQCDALALPYPGVLPEGPPPSKAFGS.

Residues Arg-88 and 126-128 (GTR) each bind phosphate.

This sequence belongs to the RNase PH family. Homohexameric ring arranged as a trimer of dimers.

It catalyses the reaction tRNA(n+1) + phosphate = tRNA(n) + a ribonucleoside 5'-diphosphate. Its function is as follows. Phosphorolytic 3'-5' exoribonuclease that plays an important role in tRNA 3'-end maturation. Removes nucleotide residues following the 3'-CCA terminus of tRNAs; can also add nucleotides to the ends of RNA molecules by using nucleoside diphosphates as substrates, but this may not be physiologically important. Probably plays a role in initiation of 16S rRNA degradation (leading to ribosome degradation) during starvation. This is Ribonuclease PH from Mycobacterium ulcerans (strain Agy99).